The primary structure comprises 551 residues: E3 ubiquitin-protein ligase TRIM8 (551 aa).

The RING-type zinc finger occupies 15-56; it reads CPICLHVFVEPVQLPCKHNFCRGCIGEAWAKDSGLVRCPECN. 2 consecutive B box-type zinc fingers follow at residues 92–132 and 140–182; these read CVFC…ARGH and VRAW…VCDV. Coiled-coil stretches lie at residues 181–249 and 274–295; these read DVEI…DLRQ and ERMQEAKKLLGSLQRLFDKTED. Residues 399–457 are disordered; that stretch reads QYGAAGTASSEGQSGQPLGPCSSTQHLVALPGGTQPVHSSPVFPPSQYPNGSTTQQPML. Composition is skewed to polar residues over residues 405–424 and 446–456; these read TASSEGQSGQPLGPCSSTQH and YPNGSTTQQPM.

This sequence belongs to the TRIM/RBCC family. Homodimer. Interacts with SOCS1 (via) SH2 domain and SOCS box. Interacts with HSP90AB1; prevents nucleus translocation of phosphorylated STAT3 and HSP90AB1. Interacts with MAP3K7/TAK1. Interacts with PIAS3. Interacts with TICAM1. Interacts with TRIM15; this interaction prevents TRIM8 cytoplasmic translocation. High expression in heart, liver, and thymus. Expressed in embryonic CNS, kidney, lens and gut.

The enzyme catalyses S-ubiquitinyl-[E2 ubiquitin-conjugating enzyme]-L-cysteine + [acceptor protein]-L-lysine = [E2 ubiquitin-conjugating enzyme]-L-cysteine + N(6)-ubiquitinyl-[acceptor protein]-L-lysine.. The protein operates within protein modification; protein ubiquitination. Its function is as follows. E3 ubiquitin-protein ligase that participates in multiple biological processes including cell survival, differentiation, apoptosis, and in particular, the innate immune response. Participates in the activation of interferon-gamma signaling by promoting proteasomal degradation of the repressor SOCS1. Plays a positive role in the TNFalpha and IL-1beta signaling pathways. Mechanistically, induces the 'Lys-63'-linked polyubiquitination of MAP3K7/TAK1 component leading to the activation of NF-kappa-B. Also modulates STAT3 activity through negative regulation of PIAS3, either by degradation of PIAS3 through the ubiquitin-proteasome pathway or exclusion of PIAS3 from the nucleus. Negatively regulates TLR3/4-mediated innate immune response by catalyzing 'Lys-6'- and 'Lys-33'-linked polyubiquitination of TICAM1 and thereby disrupting the TICAM1-TBK1 interaction. The sequence is that of E3 ubiquitin-protein ligase TRIM8 (Trim8) from Mus musculus (Mouse).